A 372-amino-acid chain; its full sequence is Queuine tRNA-ribosyltransferase (372 aa).

Aspartate 90 (proton acceptor) is an active-site residue. Residues 90 to 94, aspartate 144, glutamine 193, and glycine 220 contribute to the substrate site; that span reads DSGGF. Residues 251-257 are RNA binding; the sequence is GVGTPED. Residue aspartate 270 is the Nucleophile of the active site. Residues 275-279 are RNA binding; important for wobble base 34 recognition; sequence TRNAR. Cysteine 308, cysteine 310, cysteine 313, and histidine 339 together coordinate Zn(2+).

Belongs to the queuine tRNA-ribosyltransferase family. In terms of assembly, homodimer. Within each dimer, one monomer is responsible for RNA recognition and catalysis, while the other monomer binds to the replacement base PreQ1. Zn(2+) is required as a cofactor.

The enzyme catalyses 7-aminomethyl-7-carbaguanine + guanosine(34) in tRNA = 7-aminomethyl-7-carbaguanosine(34) in tRNA + guanine. The protein operates within tRNA modification; tRNA-queuosine biosynthesis. Its function is as follows. Catalyzes the base-exchange of a guanine (G) residue with the queuine precursor 7-aminomethyl-7-deazaguanine (PreQ1) at position 34 (anticodon wobble position) in tRNAs with GU(N) anticodons (tRNA-Asp, -Asn, -His and -Tyr). Catalysis occurs through a double-displacement mechanism. The nucleophile active site attacks the C1' of nucleotide 34 to detach the guanine base from the RNA, forming a covalent enzyme-RNA intermediate. The proton acceptor active site deprotonates the incoming PreQ1, allowing a nucleophilic attack on the C1' of the ribose to form the product. After dissociation, two additional enzymatic reactions on the tRNA convert PreQ1 to queuine (Q), resulting in the hypermodified nucleoside queuosine (7-(((4,5-cis-dihydroxy-2-cyclopenten-1-yl)amino)methyl)-7-deazaguanosine). The protein is Queuine tRNA-ribosyltransferase of Sulfurimonas denitrificans (strain ATCC 33889 / DSM 1251) (Thiomicrospira denitrificans (strain ATCC 33889 / DSM 1251)).